The following is a 133-amino-acid chain: Large-conductance mechanosensitive channel (133 aa).

Helical transmembrane passes span 10-30 (FAMR…GAFG) and 76-96 (GAFI…FLMI).

It belongs to the MscL family. Homopentamer.

It localises to the cell inner membrane. Its function is as follows. Channel that opens in response to stretch forces in the membrane lipid bilayer. May participate in the regulation of osmotic pressure changes within the cell. The chain is Large-conductance mechanosensitive channel from Pasteurella multocida (strain Pm70).